The sequence spans 304 residues: MKRAHPEYSSSDSELDETIEVEKESADENGNLSSALGSMSPTTSSQILARKRRRGIIEKRRRDRINNSLSELRRLVPSAFEKQGSAKLEKAEILQMTVDHLKMLHTAGGKGYFDAHALAMDYRSLGFRECLAEVARYLSIIEGLDASDPLRVRLVSHLNNYASQREAASGAHAGLGHIPWGTVFGHHPHIAHPLLLPQNGHGNAGTTASPTEPHHQGRLGSAHPEAPALRAPPSGSLGPVLPVVTSASKLSPPLLSSVASLSAFPFSFGSFHLLSPNALSPSAPTQAANLGKPYRPWGTEIGAF.

The interval 1 to 52 (MKRAHPEYSSSDSELDETIEVEKESADENGNLSSALGSMSPTTSSQILARKR) is disordered. The span at 28-47 (ENGNLSSALGSMSPTTSSQI) shows a compositional bias: polar residues. Residues 48 to 117 (LARKRRRGII…GGKGYFDAHA (70 aa)) are transcriptional repression and interaction with NCOR1 and SIN3A. The region spanning 49-104 (ARKRRRGIIEKRRRDRINNSLSELRRLVPSAFEKQGSAKLEKAEILQMTVDHLKML) is the bHLH domain. The Orange domain maps to 122–158 (YRSLGFRECLAEVARYLSIIEGLDASDPLRVRLVSHL). Positions 196–234 (LPQNGHGNAGTTASPTEPHHQGRLGSAHPEAPALRAPPS) are disordered. Positions 200–210 (GHGNAGTTASP) are enriched in polar residues. The YRPW motif signature appears at 294–297 (YRPW).

Belongs to the HEY family. In terms of assembly, self-associates. Interacts with HES1 and HEYL. Interacts with HDAC1, NCOR1 and SIN3A. Interacts with GATA4 and GATA6. Interacts with CCDC89/BOIP. In terms of tissue distribution, expressed in the somitic mesoderm, the central nervous system, the kidney, the heart, nasal epithelium, and limbs.

It is found in the nucleus. In terms of biological role, transcriptional repressor which binds preferentially to the canonical E box sequence 5'-CACGTG-3'. Downstream effector of Notch signaling required for cardiovascular development. Specifically required for the Notch-induced endocardial epithelial to mesenchymal transition, which is itself criticial for cardiac valve and septum development. May be required in conjunction with HEY2 to specify arterial cell fate or identity. Promotes maintenance of neuronal precursor cells and glial versus neuronal fate specification. Represses transcription by the cardiac transcriptional activators GATA4 and GATA6 and by the neuronal bHLH factors ASCL1/MASH1 and NEUROD4/MATH3. Involved in the regulation of liver cancer cells self-renewal. The sequence is that of Hairy/enhancer-of-split related with YRPW motif protein 1 (HEY1) from Homo sapiens (Human).